Reading from the N-terminus, the 251-residue chain is Small ribosomal subunit protein uS2 (251 aa).

It belongs to the universal ribosomal protein uS2 family.

In Novosphingobium aromaticivorans (strain ATCC 700278 / DSM 12444 / CCUG 56034 / CIP 105152 / NBRC 16084 / F199), this protein is Small ribosomal subunit protein uS2.